Here is a 522-residue protein sequence, read N- to C-terminus: Peptide methionine sulfoxide reductase MsrA/MsrB (522 aa).

In terms of domain architecture, Thioredoxin spans 17-174; sequence LALGACSPKI…ALALIRNPNA (158 aa). Residues cysteine 68 and cysteine 71 are joined by a disulfide bond. The segment at 199-354 is peptide methionine sulfoxide reductase A; sequence RTIYLAGGCF…PNGYCHIDIR (156 aa). The active site involves cysteine 207. One can recognise a MsrB domain in the interval 383-506; it reads DAELKRTLTE…NGASLKFIPL (124 aa). Cysteines 440 and 495 form a disulfide. Cysteine 495 serves as the catalytic Nucleophile.

The protein in the N-terminal section; belongs to the thioredoxin family. In the central section; belongs to the MsrA Met sulfoxide reductase family. This sequence in the C-terminal section; belongs to the MsrB Met sulfoxide reductase family.

It carries out the reaction L-methionyl-[protein] + [thioredoxin]-disulfide + H2O = L-methionyl-(S)-S-oxide-[protein] + [thioredoxin]-dithiol. It catalyses the reaction [thioredoxin]-disulfide + L-methionine + H2O = L-methionine (S)-S-oxide + [thioredoxin]-dithiol. The catalysed reaction is L-methionyl-[protein] + [thioredoxin]-disulfide + H2O = L-methionyl-(R)-S-oxide-[protein] + [thioredoxin]-dithiol. Its function is as follows. Has an important function as a repair enzyme for proteins that have been inactivated by oxidation. Catalyzes the reversible oxidation-reduction of methionine sulfoxide in proteins to methionine. The chain is Peptide methionine sulfoxide reductase MsrA/MsrB (msrAB) from Neisseria gonorrhoeae.